The following is a 279-amino-acid chain: Thioredoxin domain-containing protein plp1 (279 aa).

The segment covering 56–70 (RKEDTQDYNEPELHN) has biased composition (basic and acidic residues). The disordered stretch occupies residues 56 to 75 (RKEDTQDYNEPELHNSNDPT). The region spanning 137-248 (FLTVENEREV…LEFRLLKSSA (112 aa)) is the Thioredoxin domain. Positions 254–267 (EESSSNKSIYHDEL) are enriched in basic and acidic residues. A disordered region spans residues 254–279 (EESSSNKSIYHDELQNNQSDDSDFFE). A phosphoserine mark is found at S272 and S275.

It belongs to the phosducin family.

Its subcellular location is the cytoplasm. The protein localises to the nucleus. In terms of biological role, inhibits early G-protein signaling events following pheromone stimulation. May help create heterodimerizable beta-tubulin by facilitating the efficient transfer of nascent beta-tubulin polypeptides to the folding apparatus. The sequence is that of Thioredoxin domain-containing protein plp1 (plp1) from Schizosaccharomyces pombe (strain 972 / ATCC 24843) (Fission yeast).